Reading from the N-terminus, the 206-residue chain is High-affinity nitrate transporter-activating protein 2.1 (206 aa).

The first 27 residues, 1-27 (MARLAGVAALSLVLVLLGAGVPRPAAA), serve as a signal peptide directing secretion. A helical transmembrane segment spans residues 180 to 200 (VAAGVFSTFSIAALAFFFVVE).

This sequence belongs to the NAR2 family. Heterotetramer composed of two NRT2.1, NRT2.2 or NRT2.3 and two NAR2.1. Interacts with NRT2.1, NRT2.2 and isoform 1 of NRT2.3. In terms of tissue distribution, expressed in epidermal cells of primary and lateral roots, root-shoot junction zone, vascular tissues of adventitious root primordia, stems and coleoptiles of germinating seeds.

It is found in the cell membrane. Functionally, acts as a dual component transporter with NTR2.1, NRT2.2 and NRT2.3. Required for high-affinity nitrate transport. Involved in the regulation of NRT2.1, NRT2.2 and NRT2.3 expression, and in both, HATS (high-affinity transport system) and LATS (low-affinity transport system) activities in plant roots. Imports nitrate with high affinity when expressed with NTR2.1, NTR2.2 or NTR2.3 in a heterologous system (Xenopus oocytes). The protein is High-affinity nitrate transporter-activating protein 2.1 (NAR2.1) of Oryza sativa subsp. japonica (Rice).